The primary structure comprises 243 residues: Tryptophan synthase alpha chain (243 aa).

Residues E31 and D42 each act as proton acceptor in the active site.

It belongs to the TrpA family. Tetramer of two alpha and two beta chains.

It carries out the reaction (1S,2R)-1-C-(indol-3-yl)glycerol 3-phosphate + L-serine = D-glyceraldehyde 3-phosphate + L-tryptophan + H2O. Its pathway is amino-acid biosynthesis; L-tryptophan biosynthesis; L-tryptophan from chorismate: step 5/5. The alpha subunit is responsible for the aldol cleavage of indoleglycerol phosphate to indole and glyceraldehyde 3-phosphate. The chain is Tryptophan synthase alpha chain from Staphylococcus haemolyticus (strain JCSC1435).